Here is a 264-residue protein sequence, read N- to C-terminus: Zinc import ATP-binding protein ZnuC (264 aa).

The ABC transporter domain maps to 20-235; that stretch reads VQLKNIEVTF…PNFIHFFGDQ (216 aa). Residue 52–59 coordinates ATP; that stretch reads GPNGGGKS.

Belongs to the ABC transporter superfamily. Zinc importer (TC 3.A.1.15.5) family. The complex is composed of two ATP-binding proteins (ZnuC), two transmembrane proteins (ZnuB) and a solute-binding protein (ZnuA).

It localises to the cell inner membrane. The catalysed reaction is Zn(2+)(out) + ATP(in) + H2O(in) = Zn(2+)(in) + ADP(in) + phosphate(in) + H(+)(in). Its function is as follows. Part of the ABC transporter complex ZnuABC involved in zinc import. Responsible for energy coupling to the transport system. The protein is Zinc import ATP-binding protein ZnuC of Haemophilus ducreyi (strain 35000HP / ATCC 700724).